We begin with the raw amino-acid sequence, 95 residues long: Progonadoliberin-1 (95 aa).

Positions 1-22 (MAPQTFALWLLLVGTLLGQGCC) are cleaved as a signal peptide. Glutamine 23 carries the pyrrolidone carboxylic acid modification. A Glycine amide modification is found at glycine 32.

This sequence belongs to the GnRH family.

The protein resides in the secreted. Its function is as follows. Stimulates the secretion of gonadotropins. This Morone saxatilis (Striped bass) protein is Progonadoliberin-1 (gnrh1).